The following is a 783-amino-acid chain: Probable galactinol--sucrose galactosyltransferase 5 (783 aa).

A phosphoserine mark is found at serine 9 and serine 11.

It belongs to the glycosyl hydrolases 36 family.

The enzyme catalyses alpha-D-galactosyl-(1-&gt;3)-1D-myo-inositol + sucrose = raffinose + myo-inositol. Functionally, transglycosidase operating by a ping-pong reaction mechanism. Involved in the synthesis of raffinose, a major soluble carbohydrate in seeds, roots and tubers. This is Probable galactinol--sucrose galactosyltransferase 5 (RFS5) from Arabidopsis thaliana (Mouse-ear cress).